A 159-amino-acid chain; its full sequence is MQQAPVVLSTLDKLLNWGRSNSLWPLTYGLACCAIEMMATGGSRFDFDRFGTIFRASPRQSDVMIIAGTLTKKHAEFMRRLYDQMPEPKWVISMGSCANTGGMFNTYATVQGADRIVPVDIYLPGCAPRPETLQYALMVLQDKIRRSKAIKQDAPKRLV.

The [4Fe-4S] cluster site is built by C32, C33, C97, and C126.

It belongs to the complex I 20 kDa subunit family. NDH-1 is composed of 14 different subunits. Subunits NuoB, C, D, E, F, and G constitute the peripheral sector of the complex. Requires [4Fe-4S] cluster as cofactor.

The protein localises to the cell inner membrane. It catalyses the reaction a quinone + NADH + 5 H(+)(in) = a quinol + NAD(+) + 4 H(+)(out). Its function is as follows. NDH-1 shuttles electrons from NADH, via FMN and iron-sulfur (Fe-S) centers, to quinones in the respiratory chain. The immediate electron acceptor for the enzyme in this species is believed to be ubiquinone. Couples the redox reaction to proton translocation (for every two electrons transferred, four hydrogen ions are translocated across the cytoplasmic membrane), and thus conserves the redox energy in a proton gradient. The polypeptide is NADH-quinone oxidoreductase subunit B (Helicobacter pylori (strain P12)).